Consider the following 196-residue polypeptide: Cell division protein SepF (196 aa).

Positions 15-80 are disordered; sequence VEDDEEFNEP…PKRSASTFSK (66 aa). Low complexity predominate over residues 57–72; sequence PAQTTPKPQTQTAAPK.

It belongs to the SepF family. As to quaternary structure, homodimer. Interacts with FtsZ.

It localises to the cytoplasm. Functionally, cell division protein that is part of the divisome complex and is recruited early to the Z-ring. Probably stimulates Z-ring formation, perhaps through the cross-linking of FtsZ protofilaments. Its function overlaps with FtsA. The chain is Cell division protein SepF from Lactococcus lactis subsp. cremoris (strain MG1363).